We begin with the raw amino-acid sequence, 400 residues long: Canavanine gamma-lyase (400 aa).

Lys213 is modified (N6-(pyridoxal phosphate)lysine).

This sequence belongs to the trans-sulfuration enzymes family. It depends on pyridoxal 5'-phosphate as a cofactor.

The enzyme catalyses L-canavanine + H2O = N-hydroxyguanidine + L-homoserine. Its function is as follows. Lyase involved in the degradation of canavanine, the delta-oxa-analog of arginine, allowing growth on canavanine as sole nitrogen and carbon source. Catalyzes the elimination of hydroxyguanidine from canavanine with a subsequent water addition to yield homoserine. Is highly specific for canavanine and cannot use methionine, cystathionine or arginine. The polypeptide is Canavanine gamma-lyase (Pseudomonas canavaninivorans).